Reading from the N-terminus, the 340-residue chain is MADRSKGFMRAEFVTYAYILLYIALSSGQIFFNKWVLSSKEINFPYPLGLTLLHMIFSSVLCFLLTKVLKIVKVEEGMTLEIYVTSVIPIGAMFAMTLWLGNTAYLYISVAFAQMLKAIMPVAVFILGVAAGLEMMSCRMLLIMSIISFGVLVASYGELNINWIGVVYQMGGVVGEALRLIFMELLVKRKGIKLNPISLMYYVSPCSAICLFVPWIFLEKSKIDGNGPWNFHFVVLTLNSLCTFALNLSVFLVISHTSALTIRVAGVVKDWVVVLVSALLFADTKLTIINLFGYAIAIAGVAAYNNHKLKKEASKVVTTETPGDAESIPLVSQGNTNTER.

10 helical membrane-spanning segments follow: residues 12 to 32 (EFVT…QIFF), 44 to 64 (FPYP…LCFL), 80 to 100 (LEIY…TLWL), 110 to 130 (VAFA…LGVA), 141 to 161 (LLIM…ELNI), 163 to 183 (WIGV…LIFM), 197 to 217 (ISLM…PWIF), 234 to 254 (VVLT…FLVI), 260 to 282 (LTIR…LLFA), and 286 to 305 (LTII…AAYN). The interval 320 to 340 (ETPGDAESIPLVSQGNTNTER) is disordered. The span at 330-340 (LVSQGNTNTER) shows a compositional bias: polar residues.

Belongs to the TPT transporter family. TPT (TC 2.A.7.9) subfamily.

The protein localises to the membrane. This is Probable sugar phosphate/phosphate translocator At3g14410 from Arabidopsis thaliana (Mouse-ear cress).